Here is a 491-residue protein sequence, read N- to C-terminus: Aspartyl/glutamyl-tRNA(Asn/Gln) amidotransferase subunit B (491 aa).

Belongs to the GatB/GatE family. GatB subfamily. Heterotrimer of A, B and C subunits.

It carries out the reaction L-glutamyl-tRNA(Gln) + L-glutamine + ATP + H2O = L-glutaminyl-tRNA(Gln) + L-glutamate + ADP + phosphate + H(+). It catalyses the reaction L-aspartyl-tRNA(Asn) + L-glutamine + ATP + H2O = L-asparaginyl-tRNA(Asn) + L-glutamate + ADP + phosphate + 2 H(+). Its function is as follows. Allows the formation of correctly charged Asn-tRNA(Asn) or Gln-tRNA(Gln) through the transamidation of misacylated Asp-tRNA(Asn) or Glu-tRNA(Gln) in organisms which lack either or both of asparaginyl-tRNA or glutaminyl-tRNA synthetases. The reaction takes place in the presence of glutamine and ATP through an activated phospho-Asp-tRNA(Asn) or phospho-Glu-tRNA(Gln). The protein is Aspartyl/glutamyl-tRNA(Asn/Gln) amidotransferase subunit B of Trichormus variabilis (strain ATCC 29413 / PCC 7937) (Anabaena variabilis).